Reading from the N-terminus, the 790-residue chain is Probable phosphoketolase (790 aa).

It belongs to the XFP family. Thiamine diphosphate serves as cofactor.

The protein is Probable phosphoketolase of Nitrosomonas europaea (strain ATCC 19718 / CIP 103999 / KCTC 2705 / NBRC 14298).